The following is a 485-amino-acid chain: Rop guanine nucleotide exchange factor 2 (485 aa).

Positions 1-36 (MENLPNHEENDDVGYHQSPGPIDPNDHSASETPVYS) are disordered. Residues 107-485 (LAVQEISEPE…YVDKTMRGEE (379 aa)) enclose the PRONE domain.

Interacts with ARC10/ROP11. As to expression, expressed in the vascular tissues of roots, leaves, sepals, petals and siliques.

Functionally, guanine-nucleotide exchange factor (GEF) that acts as an activator of Rop (Rho of plants) GTPases by promoting the exchange of GDP for GTP. In Arabidopsis thaliana (Mouse-ear cress), this protein is Rop guanine nucleotide exchange factor 2 (ROPGEF2).